The primary structure comprises 1081 residues: Isoleucine--tRNA ligase (1081 aa).

A 'HIGH' region motif is present at residues Pro53–Asn63. The 'KMSKS' region signature appears at Lys607 to Ser611. Lys610 provides a ligand contact to ATP.

This sequence belongs to the class-I aminoacyl-tRNA synthetase family.

The enzyme catalyses tRNA(Ile) + L-isoleucine + ATP = L-isoleucyl-tRNA(Ile) + AMP + diphosphate. This is Isoleucine--tRNA ligase (ILSA) from Tetrahymena thermophila.